A 299-amino-acid polypeptide reads, in one-letter code: Probable lipid kinase YegS (299 aa).

The 132-residue stretch at 2–133 (AEFPASLLIL…IDMAQVNKQT (132 aa)) folds into the DAGKc domain. ATP is bound by residues Thr-40, 66 to 72 (GDGTINE), and Thr-95. Mg(2+) is bound by residues Leu-215, Asp-218, and Leu-220. Catalysis depends on Glu-271, which acts as the Proton acceptor.

The protein belongs to the diacylglycerol/lipid kinase family. YegS lipid kinase subfamily. Mg(2+) serves as cofactor. It depends on Ca(2+) as a cofactor.

It is found in the cytoplasm. Its function is as follows. Probably phosphorylates lipids; the in vivo substrate is unknown. The polypeptide is Probable lipid kinase YegS (Escherichia coli O17:K52:H18 (strain UMN026 / ExPEC)).